The primary structure comprises 277 residues: Nickel import ATP-binding protein NikE (277 aa).

Positions 14–253 (YRTVSLVGRS…EHPASRALQR (240 aa)) constitute an ABC transporter domain. Position 46–53 (46–53 (GRSGSGKS)) interacts with ATP.

It belongs to the ABC transporter superfamily. Nickel importer (TC 3.A.1.5.3) family. As to quaternary structure, the complex is composed of two ATP-binding proteins (NikD and NikE), two transmembrane proteins (NikB and NikC) and a solute-binding protein (NikA).

It localises to the cell inner membrane. It carries out the reaction Ni(2+)(out) + ATP + H2O = Ni(2+)(in) + ADP + phosphate + H(+). In terms of biological role, part of the ABC transporter complex NikABCDE involved in nickel import. Responsible for energy coupling to the transport system. The polypeptide is Nickel import ATP-binding protein NikE (Rhodospirillum rubrum (strain ATCC 11170 / ATH 1.1.1 / DSM 467 / LMG 4362 / NCIMB 8255 / S1)).